The following is a 219-amino-acid chain: Large ribosomal subunit protein bL25 (219 aa).

The segment at 176–219 is disordered; sequence VTVVPPTDEPSEEEVEAMEGESATEEPEVVGEDKEDDEEENKED. A compositionally biased stretch (acidic residues) spans 184-219; sequence EPSEEEVEAMEGESATEEPEVVGEDKEDDEEENKED.

Belongs to the bacterial ribosomal protein bL25 family. CTC subfamily. In terms of assembly, part of the 50S ribosomal subunit; part of the 5S rRNA/L5/L18/L25 subcomplex. Contacts the 5S rRNA. Binds to the 5S rRNA independently of L5 and L18.

In terms of biological role, this is one of the proteins that binds to the 5S RNA in the ribosome where it forms part of the central protuberance. The protein is Large ribosomal subunit protein bL25 of Staphylococcus epidermidis (strain ATCC 35984 / DSM 28319 / BCRC 17069 / CCUG 31568 / BM 3577 / RP62A).